The sequence spans 279 residues: Four and a half LIM domains protein 2 (279 aa).

The segment at 7–31 adopts a C4-type zinc-finger fold; it reads CHHCNESLYGKKYILKEENPHCVAC. LIM zinc-binding domains are found at residues 40-92, 101-153, and 162-212; these read CEEC…CTDC, CQEC…CVPC, and CVQC…CLTC. Lys78 participates in a covalent cross-link: Glycyl lysine isopeptide (Lys-Gly) (interchain with G-Cter in SUMO2). Residues Lys167 and Lys220 each participate in a glycyl lysine isopeptide (Lys-Gly) (interchain with G-Cter in SUMO2) cross-link. An LIM zinc-binding 4 domain is found at 221–275; the sequence is CAGCTNPISGLGGTKYISFEERQWHNDCFNCKKCSLSLVGRGFLTERDDILCPDC. At Ser238 the chain carries Phosphoserine.

Interacts with ZNF638 and TTN/titin. Interacts with E4F1. Interacts with GRB7. Interacts with SIRT1 and FOXO1. Interacts with CEFIP and calcineurin. Interacts with FOXK1. As to expression, expressed in heart only (at protein level).

The protein localises to the cytoplasm. It is found in the nucleus. Its subcellular location is the myofibril. The protein resides in the sarcomere. It localises to the z line. In terms of biological role, may function as a molecular transmitter linking various signaling pathways to transcriptional regulation. Negatively regulates the transcriptional repressor E4F1 and may function in cell growth. Inhibits the transcriptional activity of FOXO1 and its apoptotic function by enhancing the interaction of FOXO1 with SIRT1 and FOXO1 deacetylation. Negatively regulates the calcineurin/NFAT signaling pathway in cardiomyocytes. In Rattus norvegicus (Rat), this protein is Four and a half LIM domains protein 2 (Fhl2).